Here is a 364-residue protein sequence, read N- to C-terminus: Methylthioribose-1-phosphate isomerase (364 aa).

Asp-254 (proton donor) is an active-site residue.

This sequence belongs to the eIF-2B alpha/beta/delta subunits family. MtnA subfamily.

Its subcellular location is the cytoplasm. The protein localises to the nucleus. The catalysed reaction is 5-(methylsulfanyl)-alpha-D-ribose 1-phosphate = 5-(methylsulfanyl)-D-ribulose 1-phosphate. Its pathway is amino-acid biosynthesis; L-methionine biosynthesis via salvage pathway; L-methionine from S-methyl-5-thio-alpha-D-ribose 1-phosphate: step 1/6. In terms of biological role, catalyzes the interconversion of methylthioribose-1-phosphate (MTR-1-P) into methylthioribulose-1-phosphate (MTRu-1-P). The chain is Methylthioribose-1-phosphate isomerase from Drosophila ananassae (Fruit fly).